The chain runs to 96 residues: Large ribosomal subunit protein eL43 (96 aa).

The segment at 41–62 (CPVCAFPKLKRAGTSIWVCEKC) adopts a C4-type zinc-finger fold.

This sequence belongs to the eukaryotic ribosomal protein eL43 family. It depends on Zn(2+) as a cofactor.

The protein is Large ribosomal subunit protein eL43 of Methanococcus maripaludis (strain C5 / ATCC BAA-1333).